A 91-amino-acid chain; its full sequence is MTHAREWRSSLTTTLLMVILLSYMLHLFCVYSRVGAIRIFPETPASGKRQEEDLMKKYFGAGKFPPVDSFVGKGISESKRIVPSCPDPLHN.

A signal peptide spans 1 to 35 (MTHAREWRSSLTTTLLMVILLSYMLHLFCVYSRVG). Hydroxyproline occurs at positions 83 and 86. O-linked (Ara...) hydroxyproline glycosylation is present at proline 86.

Belongs to the CLV3/ESR signal peptide family. In terms of processing, the O-glycosylation (arabinosylation) of the hydroxyproline Pro-86 enhances binding affinity of the CLE27p peptide for its receptor. In terms of tissue distribution, mostly expressed in apex, and, to a lower extent, in roots, leaves, flowers and siliques.

It is found in the secreted. Its subcellular location is the extracellular space. In terms of biological role, extracellular signal peptide that regulates cell fate. Represses root apical meristem maintenance. This chain is CLAVATA3/ESR (CLE)-related protein 27, found in Arabidopsis thaliana (Mouse-ear cress).